The primary structure comprises 446 residues: tRNA modification GTPase MnmE (446 aa).

(6S)-5-formyl-5,6,7,8-tetrahydrofolate contacts are provided by Arg24, Glu81, and Lys120. Residues 216–368 (GLHAVLIGPP…LHTRLRELAL (153 aa)) form the TrmE-type G domain. Asn226 lines the K(+) pocket. Residues 226 to 231 (NAGKSS), 245 to 251 (TDVAGTT), and 270 to 273 (DTAG) contribute to the GTP site. Residue Ser230 coordinates Mg(2+). Positions 245, 247, and 250 each coordinate K(+). Mg(2+) is bound at residue Thr251. Residue Lys446 coordinates (6S)-5-formyl-5,6,7,8-tetrahydrofolate.

This sequence belongs to the TRAFAC class TrmE-Era-EngA-EngB-Septin-like GTPase superfamily. TrmE GTPase family. Homodimer. Heterotetramer of two MnmE and two MnmG subunits. K(+) serves as cofactor.

The protein resides in the cytoplasm. Its function is as follows. Exhibits a very high intrinsic GTPase hydrolysis rate. Involved in the addition of a carboxymethylaminomethyl (cmnm) group at the wobble position (U34) of certain tRNAs, forming tRNA-cmnm(5)s(2)U34. This is tRNA modification GTPase MnmE from Xanthomonas campestris pv. campestris (strain B100).